The following is a 453-amino-acid chain: Ribosomal protein uS12 methylthiotransferase RimO (453 aa).

The MTTase N-terminal domain maps to 5–120 (PKVGFVSLGC…VMQAVHSHLP (116 aa)). Positions 14, 50, 79, 151, 155, and 158 each coordinate [4Fe-4S] cluster. One can recognise a Radical SAM core domain in the interval 137–382 (LTPRHYAYLK…MEVAEEVSAR (246 aa)). The 69-residue stretch at 385 to 453 (ARKVGKTLKV…ADGHDLWGEV (69 aa)) folds into the TRAM domain.

Belongs to the methylthiotransferase family. RimO subfamily. [4Fe-4S] cluster serves as cofactor.

It localises to the cytoplasm. It catalyses the reaction L-aspartate(89)-[ribosomal protein uS12]-hydrogen + (sulfur carrier)-SH + AH2 + 2 S-adenosyl-L-methionine = 3-methylsulfanyl-L-aspartate(89)-[ribosomal protein uS12]-hydrogen + (sulfur carrier)-H + 5'-deoxyadenosine + L-methionine + A + S-adenosyl-L-homocysteine + 2 H(+). Catalyzes the methylthiolation of an aspartic acid residue of ribosomal protein uS12. The protein is Ribosomal protein uS12 methylthiotransferase RimO of Burkholderia multivorans (strain ATCC 17616 / 249).